The following is a 215-amino-acid chain: 3,4-dihydroxy-2-butanone 4-phosphate synthase (215 aa).

Residues 37 to 38 (RE), D42, 150 to 154 (RRGHT), and E175 contribute to the D-ribulose 5-phosphate site. Position 38 (E38) interacts with Mg(2+). H153 contacts Mg(2+).

This sequence belongs to the DHBP synthase family. Homodimer. The cofactor is Mg(2+). Mn(2+) serves as cofactor.

The catalysed reaction is D-ribulose 5-phosphate = (2S)-2-hydroxy-3-oxobutyl phosphate + formate + H(+). It participates in cofactor biosynthesis; riboflavin biosynthesis; 2-hydroxy-3-oxobutyl phosphate from D-ribulose 5-phosphate: step 1/1. Catalyzes the conversion of D-ribulose 5-phosphate to formate and 3,4-dihydroxy-2-butanone 4-phosphate. The protein is 3,4-dihydroxy-2-butanone 4-phosphate synthase of Desulfatibacillum aliphaticivorans.